Here is a 113-residue protein sequence, read N- to C-terminus: UPF0122 protein LAF_1235 (113 aa).

The protein belongs to the UPF0122 family.

Might take part in the signal recognition particle (SRP) pathway. This is inferred from the conservation of its genetic proximity to ftsY/ffh. May be a regulatory protein. This Limosilactobacillus fermentum (strain NBRC 3956 / LMG 18251) (Lactobacillus fermentum) protein is UPF0122 protein LAF_1235.